Here is a 176-residue protein sequence, read N- to C-terminus: Crossover junction endodeoxyribonuclease RuvC (176 aa).

Active-site residues include Asp12, Glu72, and Asp144. Positions 12, 72, and 144 each coordinate Mg(2+).

Belongs to the RuvC family. In terms of assembly, homodimer which binds Holliday junction (HJ) DNA. The HJ becomes 2-fold symmetrical on binding to RuvC with unstacked arms; it has a different conformation from HJ DNA in complex with RuvA. In the full resolvosome a probable DNA-RuvA(4)-RuvB(12)-RuvC(2) complex forms which resolves the HJ. It depends on Mg(2+) as a cofactor.

Its subcellular location is the cytoplasm. The enzyme catalyses Endonucleolytic cleavage at a junction such as a reciprocal single-stranded crossover between two homologous DNA duplexes (Holliday junction).. Functionally, the RuvA-RuvB-RuvC complex processes Holliday junction (HJ) DNA during genetic recombination and DNA repair. Endonuclease that resolves HJ intermediates. Cleaves cruciform DNA by making single-stranded nicks across the HJ at symmetrical positions within the homologous arms, yielding a 5'-phosphate and a 3'-hydroxyl group; requires a central core of homology in the junction. The consensus cleavage sequence is 5'-(A/T)TT(C/G)-3'. Cleavage occurs on the 3'-side of the TT dinucleotide at the point of strand exchange. HJ branch migration catalyzed by RuvA-RuvB allows RuvC to scan DNA until it finds its consensus sequence, where it cleaves and resolves the cruciform DNA. The polypeptide is Crossover junction endodeoxyribonuclease RuvC (Methylocella silvestris (strain DSM 15510 / CIP 108128 / LMG 27833 / NCIMB 13906 / BL2)).